The following is a 175-amino-acid chain: 3-hydroxydecanoyl-[acyl-carrier-protein] dehydratase (175 aa).

His-71 is a catalytic residue.

The protein belongs to the thioester dehydratase family. FabA subfamily. In terms of assembly, homodimer.

Its subcellular location is the cytoplasm. The enzyme catalyses a (3R)-hydroxyacyl-[ACP] = a (2E)-enoyl-[ACP] + H2O. It carries out the reaction (3R)-hydroxydecanoyl-[ACP] = (2E)-decenoyl-[ACP] + H2O. It catalyses the reaction (2E)-decenoyl-[ACP] = (3Z)-decenoyl-[ACP]. Its pathway is lipid metabolism; fatty acid biosynthesis. Its function is as follows. Necessary for the introduction of cis unsaturation into fatty acids. Catalyzes the dehydration of (3R)-3-hydroxydecanoyl-ACP to E-(2)-decenoyl-ACP and then its isomerization to Z-(3)-decenoyl-ACP. Can catalyze the dehydratase reaction for beta-hydroxyacyl-ACPs with saturated chain lengths up to 16:0, being most active on intermediate chain length. This Rhodopseudomonas palustris (strain ATCC BAA-98 / CGA009) protein is 3-hydroxydecanoyl-[acyl-carrier-protein] dehydratase.